We begin with the raw amino-acid sequence, 773 residues long: Polymeric immunoglobulin receptor (773 aa).

The first 18 residues, Met1–Ala18, serve as a signal peptide directing secretion. The Extracellular segment spans residues Gln19 to Lys647. The 107-residue stretch at Pro25–Leu131 folds into the Ig-like V-type 1; required for binding to polymeric IgA and IgM domain. 5 cysteine pairs are disulfide-bonded: Cys46-Cys115, Cys155-Cys225, Cys260-Cys324, Cys369-Cys438, and Cys478-Cys538. Lys88 is a glycosylation site (N-linked (GlcNAc...) asparagine; in variant N-88). Asn108 carries an N-linked (GlcNAc...) asparagine glycan. Ig-like V-type domains lie at Pro138–Thr232, Ala233–Arg340, Arg352–Val455, and Pro461–Thr557. A glycan (N-linked (GlcNAc...) asparagine) is linked at Asn418. The segment at Ala619–Gly641 is disordered. Low complexity predominate over residues Ala632–Gly641. The chain crosses the membrane as a helical span at residues Val648–Ala670. Residues Arg671–Ala773 are Cytoplasmic-facing. A phosphoserine mark is found at Ser682, Ser691, Ser698, and Ser744. Residues Ala725–Glu746 are disordered. Basic and acidic residues predominate over residues Glu735–Glu746.

Interacts (mainly via CDR1-like domain) with dimeric IgA. Interacts (mainly via CDR2-like domain) with pentameric IgM. In terms of assembly, either free or part of the secretory IgA (sIgA) complex that consists of two, four or five IgA monomers, and two additional non-Ig polypeptides, namely the JCHAIN and the secretory component (the proteolytic product of PIGR). Free secretory component interacts with bacterial antigens toxA of C.difficile and eae of E.coli. In terms of processing, N-glycosylated. N-glycosylation is required for anchoring IgA molecules to mucus, but is not necessary for Ig binding.

It localises to the cell membrane. It is found in the secreted. Functionally, mediates selective transcytosis of polymeric IgA and IgM across mucosal epithelial cells. Binds polymeric IgA and IgM at the basolateral surface of epithelial cells. The complex is then transported across the cell to be secreted at the apical surface. During this process, a cleavage occurs that separates the extracellular (known as the secretory component) from the transmembrane segment. Through its N-linked glycans ensures anchoring of secretory IgA (sIgA) molecules to mucus lining the epithelial surface to neutralize extracellular pathogens. On its own (free form) may act as a non-specific microbial scavenger to prevent pathogen interaction with epithelial cells. The protein is Polymeric immunoglobulin receptor (PIGR) of Oryctolagus cuniculus (Rabbit).